The following is a 461-amino-acid chain: Serine carboxypeptidase-like 45 (461 aa).

The first 24 residues, 1 to 24 (MSPLQWLTISFALIIFHSLTVSSS), serve as a signal peptide directing secretion. 3 disulfides stabilise this stretch: Cys-86–Cys-340, Cys-243–Cys-261, and Cys-286–Cys-309. Asn-168 carries an N-linked (GlcNAc...) asparagine glycan. Ser-177 is an active-site residue. A glycan (N-linked (GlcNAc...) asparagine) is linked at Asn-244. Residues Asp-377 and His-434 contribute to the active site.

It belongs to the peptidase S10 family. Ubiquitous.

It localises to the secreted. Probable carboxypeptidase. The protein is Serine carboxypeptidase-like 45 (SCPL45) of Arabidopsis thaliana (Mouse-ear cress).